The following is a 397-amino-acid chain: S-adenosylmethionine synthase (397 aa).

H15 provides a ligand contact to ATP. Residue D17 coordinates Mg(2+). E43 contributes to the K(+) binding site. L-methionine is bound by residues E56 and Q99. Residues 99–109 (QSGDIAMGVDE) form a flexible loop region. Residues 175–177 (DGK), 241–242 (RF), D250, 256–257 (RK), A273, and K277 each bind ATP. D250 contributes to the L-methionine binding site. Residue K281 participates in L-methionine binding.

It belongs to the AdoMet synthase family. As to quaternary structure, homotetramer; dimer of dimers. Mg(2+) is required as a cofactor. Requires K(+) as cofactor.

The protein resides in the cytoplasm. The enzyme catalyses L-methionine + ATP + H2O = S-adenosyl-L-methionine + phosphate + diphosphate. It participates in amino-acid biosynthesis; S-adenosyl-L-methionine biosynthesis; S-adenosyl-L-methionine from L-methionine: step 1/1. In terms of biological role, catalyzes the formation of S-adenosylmethionine (AdoMet) from methionine and ATP. The overall synthetic reaction is composed of two sequential steps, AdoMet formation and the subsequent tripolyphosphate hydrolysis which occurs prior to release of AdoMet from the enzyme. The sequence is that of S-adenosylmethionine synthase from Clostridioides difficile (strain 630) (Peptoclostridium difficile).